The chain runs to 295 residues: MVAKVLDGLAVSAGIFERLHRACCELENNGVCPKLATVLVGNNPASRSYVLSKHRDCKNIGIQSTLIELPANTSEKELISKVEILNASSDVSGIIVQLPLPESIDQNKVIEAINPDKDADGLHPLNLGYLVTGKQGIVPCTPAGIVKLLEAHRITLEGKTIAVIGRGTTVGRPLGILLSGKGVNATVINIHSRSRNISGLSRIADVVVACAGVKHIVEPSWIKPGAVVVDVGINQSGVSSSGKMILTGDVHPLTKNIASYISPVVGGVGPMTRAMLMSNVINLSERDFRKRLYAS.

Residues 165 to 167, serine 192, and isoleucine 233 contribute to the NADP(+) site; that span reads GRG.

This sequence belongs to the tetrahydrofolate dehydrogenase/cyclohydrolase family. As to quaternary structure, homodimer.

The catalysed reaction is (6R)-5,10-methylene-5,6,7,8-tetrahydrofolate + NADP(+) = (6R)-5,10-methenyltetrahydrofolate + NADPH. It carries out the reaction (6R)-5,10-methenyltetrahydrofolate + H2O = (6R)-10-formyltetrahydrofolate + H(+). The protein operates within one-carbon metabolism; tetrahydrofolate interconversion. In terms of biological role, catalyzes the oxidation of 5,10-methylenetetrahydrofolate to 5,10-methenyltetrahydrofolate and then the hydrolysis of 5,10-methenyltetrahydrofolate to 10-formyltetrahydrofolate. The polypeptide is Bifunctional protein FolD (Tropheryma whipplei (strain Twist) (Whipple's bacillus)).